The sequence spans 596 residues: Aspartate--tRNA(Asp/Asn) ligase (596 aa).

Glu-175 is a binding site for L-aspartate. Positions 199 to 202 (QQYK) are aspartate. 2 residues coordinate L-aspartate: Arg-221 and His-454. 221–223 (RDE) provides a ligand contact to ATP. Glu-488 contributes to the ATP binding site. L-aspartate is bound at residue Arg-495. Residue 540–543 (GIDR) participates in ATP binding.

The protein belongs to the class-II aminoacyl-tRNA synthetase family. Type 1 subfamily. As to quaternary structure, homodimer.

The protein localises to the cytoplasm. It carries out the reaction tRNA(Asx) + L-aspartate + ATP = L-aspartyl-tRNA(Asx) + AMP + diphosphate. In terms of biological role, aspartyl-tRNA synthetase with relaxed tRNA specificity since it is able to aspartylate not only its cognate tRNA(Asp) but also tRNA(Asn). Reaction proceeds in two steps: L-aspartate is first activated by ATP to form Asp-AMP and then transferred to the acceptor end of tRNA(Asp/Asn). This is Aspartate--tRNA(Asp/Asn) ligase from Rhizobium rhizogenes (strain K84 / ATCC BAA-868) (Agrobacterium radiobacter).